A 213-amino-acid chain; its full sequence is Na(+)-translocating NADH-quinone reductase subunit D (213 aa).

6 helical membrane passes run Pro21–Ala41, Ile42–Leu62, Ser69–Ile86, Leu101–Leu121, Phe131–Val151, and Phe183–Val203.

It belongs to the NqrDE/RnfAE family. As to quaternary structure, composed of six subunits; NqrA, NqrB, NqrC, NqrD, NqrE and NqrF.

It localises to the cell inner membrane. It catalyses the reaction a ubiquinone + n Na(+)(in) + NADH + H(+) = a ubiquinol + n Na(+)(out) + NAD(+). In terms of biological role, NQR complex catalyzes the reduction of ubiquinone-1 to ubiquinol by two successive reactions, coupled with the transport of Na(+) ions from the cytoplasm to the periplasm. NqrA to NqrE are probably involved in the second step, the conversion of ubisemiquinone to ubiquinol. The polypeptide is Na(+)-translocating NADH-quinone reductase subunit D (Chlamydia caviae (strain ATCC VR-813 / DSM 19441 / 03DC25 / GPIC) (Chlamydophila caviae)).